A 510-amino-acid polypeptide reads, in one-letter code: Probable ADP-ribosylation factor-binding protein C1F3.05 (510 aa).

A VHS domain is found at 14-150; sequence ATDQFNLEPN…LMAFRGYKFP (137 aa). One can recognise a GAT domain in the interval 177-301; sequence LEAHKAKLQE…VIEECSNSDL (125 aa). One can recognise a GAE domain in the interval 391 to 510; it reads TNSSLTSILQ…VEQGESHLPL (120 aa).

Its subcellular location is the golgi apparatus. The protein localises to the trans-Golgi network. Functionally, may play a role in the regulation of membrane traffic through the trans-Golgi network. This Schizosaccharomyces pombe (strain 972 / ATCC 24843) (Fission yeast) protein is Probable ADP-ribosylation factor-binding protein C1F3.05.